The sequence spans 121 residues: MALNIENIIAEIKEASILELNDLVKAIEEEFGVTAAAPVAVAAAGGAEEATKDSFDVELTSAGDKKVGVIKAVREITGLGLKEAKGLVDGAPANIKEGVAAAEAEEIKAKLEEAGATITLK.

It belongs to the bacterial ribosomal protein bL12 family. Homodimer. Part of the ribosomal stalk of the 50S ribosomal subunit. Forms a multimeric L10(L12)X complex, where L10 forms an elongated spine to which 2 to 4 L12 dimers bind in a sequential fashion. Binds GTP-bound translation factors.

Its function is as follows. Forms part of the ribosomal stalk which helps the ribosome interact with GTP-bound translation factors. Is thus essential for accurate translation. The protein is Large ribosomal subunit protein bL12 of Streptococcus equi subsp. equi (strain 4047).